A 464-amino-acid chain; its full sequence is MSAEKTNQSWGGRFSEPVDAFVARFTASVDFDKRLYRHDIMGSIAHASMLEQAGVLSAAERDAIIDGLKQIQSEIEAGQFDWRVDLEDVHMNIEARLTERIGITGKKLHTGRSRNDQVATDIRLWLRDEIDTILGEITRLQQGLLEQAERHAEVIMPGFTHLQTAQPVTFGHHLLAWFEMLARDHERLVDCRKRVNRMPLGSAALAGTTYPIQREITCRLLGFEAVGGNSLDGVSDRDFAIEFCAAASLAMMHLSRFSEELVLWTSAQFNFIELPDRFCTGSSIMPQKKNPDVPELVRGKSGRVFGHLTGLLTLMKGQPLAYNKDNQEDKEPLFDAVDTLRDSLRAFADMVPAIKPRVEAMREAARRGFSTATDLADYLVRKGLPFRDCHEIVGHAVKYGVESGKDLAEMSLDELRRFSDQISEDVFAVLTLEGSVNARDHVGGTAPAQVRAAVARGRALLAAR.

The protein belongs to the lyase 1 family. Argininosuccinate lyase subfamily.

Its subcellular location is the cytoplasm. It carries out the reaction 2-(N(omega)-L-arginino)succinate = fumarate + L-arginine. It functions in the pathway amino-acid biosynthesis; L-arginine biosynthesis; L-arginine from L-ornithine and carbamoyl phosphate: step 3/3. In Azotobacter vinelandii (strain DJ / ATCC BAA-1303), this protein is Argininosuccinate lyase.